Reading from the N-terminus, the 262-residue chain is Glutamate racemase (262 aa).

Substrate-binding positions include 10–11 and 42–43; these read DS and FG. Catalysis depends on C74, which acts as the Proton donor/acceptor. 75 to 76 is a binding site for substrate; that stretch reads NT. The active-site Proton donor/acceptor is C189. 190-191 lines the substrate pocket; sequence TH.

The protein belongs to the aspartate/glutamate racemases family.

The catalysed reaction is L-glutamate = D-glutamate. Its pathway is cell wall biogenesis; peptidoglycan biosynthesis. In terms of biological role, provides the (R)-glutamate required for cell wall biosynthesis. In Mesorhizobium japonicum (strain LMG 29417 / CECT 9101 / MAFF 303099) (Mesorhizobium loti (strain MAFF 303099)), this protein is Glutamate racemase.